The primary structure comprises 170 residues: Cytidine diphosphoramidate kinase (170 aa).

The protein belongs to the APS kinase family.

The catalysed reaction is cytidine 5'-diphosphoramidate + ATP = cytidine 3'-phospho-5'-diphosphoramidate + ADP + H(+). Its pathway is capsule biogenesis; capsule polysaccharide biosynthesis. Involved in the biosynthesis of the O-methyl phosphoramidate (MeOPN) group found on the capsular polysaccharide (CPS) of C.jejuni. Catalyzes the ATP-dependent phosphorylation of cytidine diphosphoramidate (CDP-NH(2)) to form cytidine 3'-phosphate 5'-diphosphoramidate. Can also use other substrates such as the corresponding adenine and uridine diphosphoramidate derivatives or cytidine diphosphoramidate analogs, with lower efficiency. In Campylobacter jejuni subsp. jejuni serotype O:2 (strain ATCC 700819 / NCTC 11168), this protein is Cytidine diphosphoramidate kinase.